Consider the following 107-residue polypeptide: uncharacterized protein (107 aa).

The disordered stretch occupies residues 23 to 64; it reads SASSSSSTRIPSGFASATSSKSNSSTKSSPSPINSFNNKTNN. The span at 37 to 57 shows a compositional bias: low complexity; it reads ASATSSKSNSSTKSSPSPINS. Residues 76–98 traverse the membrane as a helical segment; the sequence is LAFGIVEFMVFNGMISTITTTTF.

It is found in the membrane. This is an uncharacterized protein from Dictyostelium discoideum (Social amoeba).